A 219-amino-acid chain; its full sequence is Cytidylate kinase (219 aa).

Residue 21-29 (GPAASGKGT) participates in ATP binding.

This sequence belongs to the cytidylate kinase family. Type 1 subfamily.

The protein resides in the cytoplasm. The catalysed reaction is CMP + ATP = CDP + ADP. It catalyses the reaction dCMP + ATP = dCDP + ADP. This chain is Cytidylate kinase, found in Rickettsia typhi (strain ATCC VR-144 / Wilmington).